The following is a 284-amino-acid chain: Bifunctional protein FolD (284 aa).

Residues 165–167 (GRS) and S190 contribute to the NADP(+) site.

Belongs to the tetrahydrofolate dehydrogenase/cyclohydrolase family. Homodimer.

The enzyme catalyses (6R)-5,10-methylene-5,6,7,8-tetrahydrofolate + NADP(+) = (6R)-5,10-methenyltetrahydrofolate + NADPH. It catalyses the reaction (6R)-5,10-methenyltetrahydrofolate + H2O = (6R)-10-formyltetrahydrofolate + H(+). It functions in the pathway one-carbon metabolism; tetrahydrofolate interconversion. In terms of biological role, catalyzes the oxidation of 5,10-methylenetetrahydrofolate to 5,10-methenyltetrahydrofolate and then the hydrolysis of 5,10-methenyltetrahydrofolate to 10-formyltetrahydrofolate. The polypeptide is Bifunctional protein FolD (Streptococcus pyogenes serotype M2 (strain MGAS10270)).